Consider the following 508-residue polypeptide: Photosystem II CP47 reaction center protein (508 aa).

6 helical membrane passes run 21 to 36, 101 to 115, 140 to 156, 203 to 218, 237 to 252, and 457 to 472; these read SVHIMHTALVSGWAGS, IVFSGLCFLAAIWHW, GIHLFLSGVACFGFGAF, IAAGTLGILAGLFHLS, VLSSSIAAVFFAAFVV, and SFALLFFFGHIWHGAR.

The protein belongs to the PsbB/PsbC family. PsbB subfamily. As to quaternary structure, PSII is composed of 1 copy each of membrane proteins PsbA, PsbB, PsbC, PsbD, PsbE, PsbF, PsbH, PsbI, PsbJ, PsbK, PsbL, PsbM, PsbT, PsbX, PsbY, PsbZ, Psb30/Ycf12, at least 3 peripheral proteins of the oxygen-evolving complex and a large number of cofactors. It forms dimeric complexes. The cofactor is Binds multiple chlorophylls. PSII binds additional chlorophylls, carotenoids and specific lipids..

The protein localises to the plastid. Its subcellular location is the chloroplast thylakoid membrane. In terms of biological role, one of the components of the core complex of photosystem II (PSII). It binds chlorophyll and helps catalyze the primary light-induced photochemical processes of PSII. PSII is a light-driven water:plastoquinone oxidoreductase, using light energy to abstract electrons from H(2)O, generating O(2) and a proton gradient subsequently used for ATP formation. This chain is Photosystem II CP47 reaction center protein, found in Nymphaea alba (White water-lily).